A 635-amino-acid chain; its full sequence is Nuclear distribution protein nudE homolog 1 (635 aa).

Positions 14-192 (EKEIKHWKSK…TILRDLVTRS (179 aa)) form a coiled coil. Disordered stretches follow at residues 35-63 (ESSLQDFVESSKELEQEMEKELSASNKTI), 200-267 (TMAS…LSRD), 279-328 (VLDD…SARA), 389-504 (SRVV…DHDP), and 516-635 (AAQA…TETF). A compositionally biased stretch (basic and acidic residues) spans 43 to 56 (ESSKELEQEMEKEL). Polar residues-rich tracts occupy residues 201-224 (MASSTYDDSTAPRSEQSFDSSPIK) and 237-246 (SRQALSSPVT). Over residues 280–299 (LDDSPTATTTSAAPTRSSTL) the composition is skewed to low complexity. Polar residues-rich tracts occupy residues 314–326 (ASTSHGLTSSPSA) and 411–428 (GSPSANGHNSIHMPTSTP). The span at 516–541 (AAQASVAKRRTSMSGSGMSHSASHGS) shows a compositional bias: low complexity. Polar residues-rich tracts occupy residues 547 to 571 (SGSTLPRSTTPSTVAAPRVTQSSMT) and 580 to 619 (SKRTPLSTRLASSHRNASSARGSINGPPSSWKTSAMPAQT). The segment covering 620 to 635 (LSRSRSSSLGSETETF) has biased composition (low complexity).

The protein belongs to the nudE family. As to quaternary structure, self-associates. Interacts with PAC1.

The protein localises to the cytoplasm. It is found in the cytoskeleton. Functionally, required for nuclear migration. In Mycosarcoma maydis (Corn smut fungus), this protein is Nuclear distribution protein nudE homolog 1 (NDE1).